A 417-amino-acid chain; its full sequence is Dihydroorotase (417 aa).

Positions 60 and 62 each coordinate Zn(2+). Substrate contacts are provided by residues 62 to 64 and Asn94; that span reads HLR. Residues Lys138, His167, His207, and Asp275 each contribute to the Zn(2+) site. N6-carboxylysine is present on Lys138. Residue Asp275 is part of the active site. Substrate contacts are provided by residues His279 and 289-290; that span reads AG.

This sequence belongs to the metallo-dependent hydrolases superfamily. DHOase family. Class I DHOase subfamily. The cofactor is Zn(2+).

The catalysed reaction is (S)-dihydroorotate + H2O = N-carbamoyl-L-aspartate + H(+). Its pathway is pyrimidine metabolism; UMP biosynthesis via de novo pathway; (S)-dihydroorotate from bicarbonate: step 3/3. Catalyzes the reversible cyclization of carbamoyl aspartate to dihydroorotate. This is Dihydroorotase from Pyrococcus horikoshii (strain ATCC 700860 / DSM 12428 / JCM 9974 / NBRC 100139 / OT-3).